The chain runs to 67 residues: Large ribosomal subunit protein bL35 (67 aa).

It belongs to the bacterial ribosomal protein bL35 family.

This chain is Large ribosomal subunit protein bL35, found in Rhizobium etli (strain CIAT 652).